Here is a 20-residue protein sequence, read N- to C-terminus: C-reactive protein (20 aa).

In terms of domain architecture, Pentraxin (PTX) spans Ser1–Phe20.

Belongs to the pentraxin family. As to quaternary structure, homodimer; disulfide-linked. It is not known if it assembles into a pentraxin (or pentaxin) structure. Pentraxins have a discoid arrangement of 5 non-covalently bound subunits. Glycosylated.

The protein localises to the secreted. Its function is as follows. Displays several functions associated with host defense: it promotes agglutination, bacterial capsular swelling, phagocytosis, and complement fixation through its calcium-dependent binding to phosphorylcholine. This is C-reactive protein from Mustelus canis (Smooth dogfish).